A 132-amino-acid chain; its full sequence is Ubiquinol-cytochrome c reductase complex assembly factor 4 (132 aa).

An N-terminal signal peptide occupies residues 1 to 15 (MNRVLCAPAAGAVRA). Residues 16 to 78 (LRLIGRTSRS…GKGHQRPWWK (63 aa)) are Mitochondrial matrix-facing. Positions 24 to 73 (RSLHPLPGSRDRAHPAAEEQDDPDRPTEFSSSKANPRRWSVGHSMGKGHQ) are disordered. Basic and acidic residues predominate over residues 32–50 (SRDRAHPAAEEQDDPDRPT). A helical membrane pass occupies residues 79-95 (VLPLSCFLVALIIWCYL). Topologically, residues 96 to 132 (REESEADQWLRQVWGEVPEPSDRSEEPETPAAYRART) are mitochondrial intermembrane. Residues 110–132 (GEVPEPSDRSEEPETPAAYRART) form a disordered region.

It belongs to the UQCC4 family. As to quaternary structure, forms a complex, named COMB/coordinator of mitochondrial CYTB biogenesis, composed of UQCC1, UQCC2, UQCC4, UQCC5 and UQCC6; stabilizes nascent cytochrome b/MT-CYB and promotes its membrane insertion. Forms a complex, named COMA, composed of UQCC1, UQCC2 and UQCC4; activates MT-CYB translation. Forms a complex, named COMC, composed of UQCC1, UQCC2; UQCC3 and UQCC4; mediates MT-CYB hemylation and association with the first nuclear-encoded complex III subunit UQCRQ. Complexes COMA and COMB are bound to the mitochondrion inner membrane by UQCC4.

Its subcellular location is the mitochondrion inner membrane. Its function is as follows. Required for the assembly and stability of the mitochondrial ubiquinol-cytochrome c reductase complex (complex III (CIII) or cytochrome b-c1 complex), a multisubunit transmembrane complex that is part of the mitochondrial electron transport chain (ETC) which drives oxidative phosphorylation. The sequence is that of Ubiquinol-cytochrome c reductase complex assembly factor 4 (UQCC4) from Pongo abelii (Sumatran orangutan).